A 106-amino-acid polypeptide reads, in one-letter code: NADH-quinone oxidoreductase subunit K (106 aa).

Helical transmembrane passes span 10-30 (IHYYLILAMIIFTIGVAGVMV), 35-55 (VLIFMSVELILNSVNLVFVTF), and 67-87 (VVFFVMAIAAAEAAIGLAIVI).

This sequence belongs to the complex I subunit 4L family. NDH-1 is composed of 14 different subunits. Subunits NuoA, H, J, K, L, M, N constitute the membrane sector of the complex.

The protein resides in the cell inner membrane. The enzyme catalyses a quinone + NADH + 5 H(+)(in) = a quinol + NAD(+) + 4 H(+)(out). In terms of biological role, NDH-1 shuttles electrons from NADH, via FMN and iron-sulfur (Fe-S) centers, to quinones in the respiratory chain. The immediate electron acceptor for the enzyme in this species is believed to be ubiquinone. Couples the redox reaction to proton translocation (for every two electrons transferred, four hydrogen ions are translocated across the cytoplasmic membrane), and thus conserves the redox energy in a proton gradient. In Leptospira interrogans serogroup Icterohaemorrhagiae serovar copenhageni (strain Fiocruz L1-130), this protein is NADH-quinone oxidoreductase subunit K.